Consider the following 143-residue polypeptide: MGKPRGLRTARKHVNHRRDQRWADKDYKKAHLGTRWKANPFGGASHAKGIVLEKVGVEAKQPNSAIRKCVRVQLIKNGKKITAFVPRDGSLNYIEENDEVLVAGFGRKGHAVGDIPGVRFKVVKVANVSLLALYKEKKERPRS.

Over residues M1–D19 the composition is skewed to basic residues. The tract at residues M1–A23 is disordered. At P62 the chain carries 3-hydroxyproline.

It belongs to the universal ribosomal protein uS12 family. As to quaternary structure, component of the 40S small ribosomal subunit. Hydroxylation at Pro-62 affects translation termination efficiency.

The protein resides in the cytoplasm. It is found in the cytosol. It localises to the rough endoplasmic reticulum. The protein is Small ribosomal subunit protein uS12 (RpS23) of Drosophila melanogaster (Fruit fly).